A 368-amino-acid polypeptide reads, in one-letter code: tRNA 2-selenouridine synthase (368 aa).

The region spanning 15 to 138 (FLNQHPIMDV…MRQYLIGVIE (124 aa)) is the Rhodanese domain. Residue Cys98 is the S-selanylcysteine intermediate of the active site.

It belongs to the SelU family. In terms of assembly, monomer.

The catalysed reaction is 5-methylaminomethyl-2-thiouridine(34) in tRNA + selenophosphate + (2E)-geranyl diphosphate + H2O + H(+) = 5-methylaminomethyl-2-selenouridine(34) in tRNA + (2E)-thiogeraniol + phosphate + diphosphate. The enzyme catalyses 5-methylaminomethyl-2-thiouridine(34) in tRNA + (2E)-geranyl diphosphate = 5-methylaminomethyl-S-(2E)-geranyl-thiouridine(34) in tRNA + diphosphate. It carries out the reaction 5-methylaminomethyl-S-(2E)-geranyl-thiouridine(34) in tRNA + selenophosphate + H(+) = 5-methylaminomethyl-2-(Se-phospho)selenouridine(34) in tRNA + (2E)-thiogeraniol. It catalyses the reaction 5-methylaminomethyl-2-(Se-phospho)selenouridine(34) in tRNA + H2O = 5-methylaminomethyl-2-selenouridine(34) in tRNA + phosphate. Its function is as follows. Involved in the post-transcriptional modification of the uridine at the wobble position (U34) of tRNA(Lys), tRNA(Glu) and tRNA(Gln). Catalyzes the conversion of 2-thiouridine (S2U-RNA) to 2-selenouridine (Se2U-RNA). Acts in a two-step process involving geranylation of 2-thiouridine (S2U) to S-geranyl-2-thiouridine (geS2U) and subsequent selenation of the latter derivative to 2-selenouridine (Se2U) in the tRNA chain. This Shewanella baltica (strain OS185) protein is tRNA 2-selenouridine synthase.